Here is a 241-residue protein sequence, read N- to C-terminus: Octanoyltransferase (241 aa).

The region spanning 49–233 (GEASELVWLL…AFGEVFGPSE (185 aa)) is the BPL/LPL catalytic domain. Residues 87 to 94 (RGGQVTYH), 162 to 164 (AIG), and 175 to 177 (GIS) contribute to the substrate site. Cysteine 193 (acyl-thioester intermediate) is an active-site residue.

It belongs to the LipB family.

It localises to the cytoplasm. The enzyme catalyses octanoyl-[ACP] + L-lysyl-[protein] = N(6)-octanoyl-L-lysyl-[protein] + holo-[ACP] + H(+). Its pathway is protein modification; protein lipoylation via endogenous pathway; protein N(6)-(lipoyl)lysine from octanoyl-[acyl-carrier-protein]: step 1/2. Catalyzes the transfer of endogenously produced octanoic acid from octanoyl-acyl-carrier-protein onto the lipoyl domains of lipoate-dependent enzymes. Lipoyl-ACP can also act as a substrate although octanoyl-ACP is likely to be the physiological substrate. This is Octanoyltransferase from Nitrobacter hamburgensis (strain DSM 10229 / NCIMB 13809 / X14).